The chain runs to 100 residues: UPF0213 protein YhbQ (100 aa).

The 76-residue stretch at 2–77 (TPWFLYLIRT…KQLTKRQKER (76 aa)) folds into the GIY-YIG domain.

The protein belongs to the UPF0213 family.

This Escherichia coli O17:K52:H18 (strain UMN026 / ExPEC) protein is UPF0213 protein YhbQ.